We begin with the raw amino-acid sequence, 418 residues long: Tyrosine--tRNA ligase (418 aa).

Tyr-34 lines the L-tyrosine pocket. A 'HIGH' region motif is present at residues 39-48 (PTADSLHLGH). L-tyrosine contacts are provided by Tyr-169 and Gln-173. The 'KMSKS' region signature appears at 229–233 (KFGKS). Lys-232 is a binding site for ATP. One can recognise an S4 RNA-binding domain in the interval 352 to 418 (LNLVDMLVTA…GKKKYAVLTY (67 aa)).

This sequence belongs to the class-I aminoacyl-tRNA synthetase family. TyrS type 1 subfamily. In terms of assembly, homodimer.

The protein resides in the cytoplasm. It catalyses the reaction tRNA(Tyr) + L-tyrosine + ATP = L-tyrosyl-tRNA(Tyr) + AMP + diphosphate + H(+). In terms of biological role, catalyzes the attachment of tyrosine to tRNA(Tyr) in a two-step reaction: tyrosine is first activated by ATP to form Tyr-AMP and then transferred to the acceptor end of tRNA(Tyr). In Streptococcus pyogenes serotype M6 (strain ATCC BAA-946 / MGAS10394), this protein is Tyrosine--tRNA ligase.